A 382-amino-acid chain; its full sequence is Secreted RxLR effector protein 118 (382 aa).

The signal sequence occupies residues 1–21 (MRGAYYVTIALLVVASSQISA). Residues 48-65 (RSLRGSRDVSNDVAIEER) carry the RxLR-dEER motif. The disordered stretch occupies residues 308–382 (MNKASTSKGK…AVTSLSSISN (75 aa)). Positions 310–323 (KASTSKGKSSVFTR) are enriched in polar residues.

Belongs to the RxLR effector family.

The protein resides in the secreted. It is found in the host nucleus. Functionally, secreted effector that completely suppresses the host cell death induced by cell death-inducing proteins. This Plasmopara viticola (Downy mildew of grapevine) protein is Secreted RxLR effector protein 118.